We begin with the raw amino-acid sequence, 190 residues long: Elongation factor P-like protein (190 aa).

Belongs to the elongation factor P family.

The chain is Elongation factor P-like protein from Erwinia tasmaniensis (strain DSM 17950 / CFBP 7177 / CIP 109463 / NCPPB 4357 / Et1/99).